The chain runs to 208 residues: MAPVSALAKYKLVFLGDQSVGKTSIITRFMYDKFDNTYQATIGIDFLSKTMYLEDRTVRLQLWDTAGQERFRSLIPSYIRDSSVAVIVYDVASRQSFLNTTKWIDEVRTERGSDVIVVLVGNKTDLVDKRQVSIEEAEAKARELNVMFIETSAKAGFNIKALFRKIAAALPGMETLSSTKQEDMVDVNLKSSNANASLAQQQSGGCSC.

16-23 (GDQSVGKT) lines the GTP pocket. The Effector region signature appears at 38-46 (YQATIGIDF). GTP-binding positions include 64–68 (DTAGQ), 122–125 (NKTD), and 152–153 (SA). S-geranylgeranyl cysteine attachment occurs at residues Cys206 and Cys208. Cys208 carries the cysteine methyl ester modification.

Belongs to the small GTPase superfamily. Rab family. Interacts with the C-terminus of GC5, but not with GC3. In terms of tissue distribution, expressed in roots, stems, leaves and flowers.

It is found in the golgi apparatus membrane. Its subcellular location is the cytoplasm. It localises to the cytosol. Functionally, protein transport. Regulator of membrane traffic from the Golgi apparatus towards the endoplasmic reticulum (ER). Binds GTP and GDP and possesses intrinsic GTPase activity. This is Ras-related protein RABH1b (RABH1B) from Arabidopsis thaliana (Mouse-ear cress).